The sequence spans 385 residues: Histidinol-phosphate aminotransferase (385 aa).

Lys230 is modified (N6-(pyridoxal phosphate)lysine).

This sequence belongs to the class-II pyridoxal-phosphate-dependent aminotransferase family. The cofactor is pyridoxal 5'-phosphate.

It catalyses the reaction L-histidinol phosphate + 2-oxoglutarate = 3-(imidazol-4-yl)-2-oxopropyl phosphate + L-glutamate. Its pathway is amino-acid biosynthesis; L-histidine biosynthesis; L-histidine from 5-phospho-alpha-D-ribose 1-diphosphate: step 7/9. The sequence is that of Histidinol-phosphate aminotransferase from Saccharomyces cerevisiae (strain ATCC 204508 / S288c) (Baker's yeast).